The chain runs to 465 residues: Opioid growth factor receptor-like protein 1 (465 aa).

Disordered regions lie at residues Met-1–Lys-89 and Glu-309–Gly-465. 4 stretches are compositionally biased toward basic and acidic residues: residues Arg-48 to Gly-59, Pro-316 to Lys-325, Thr-363 to Glu-396, and Ser-426 to Glu-440. Positions Pro-442–Gly-465 are enriched in polar residues.

This sequence belongs to the opioid growth factor receptor family.

This chain is Opioid growth factor receptor-like protein 1 (Ogfrl1), found in Rattus norvegicus (Rat).